Here is a 334-residue protein sequence, read N- to C-terminus: Ornithine carbamoyltransferase (334 aa).

Carbamoyl phosphate contacts are provided by residues 57–60, glutamine 84, arginine 108, and 135–138; these read STRT and HPTQ. Residues asparagine 168, aspartate 232, and 236–237 contribute to the L-ornithine site; that span reads SM. Carbamoyl phosphate contacts are provided by residues 274-275 and arginine 321; that span reads CL.

The protein belongs to the aspartate/ornithine carbamoyltransferase superfamily. OTCase family.

It is found in the cytoplasm. The catalysed reaction is carbamoyl phosphate + L-ornithine = L-citrulline + phosphate + H(+). Its pathway is amino-acid degradation; L-arginine degradation via ADI pathway; carbamoyl phosphate from L-arginine: step 2/2. Its function is as follows. Reversibly catalyzes the transfer of the carbamoyl group from carbamoyl phosphate (CP) to the N(epsilon) atom of ornithine (ORN) to produce L-citrulline. The protein is Ornithine carbamoyltransferase of Haemophilus influenzae (strain PittGG).